We begin with the raw amino-acid sequence, 106 residues long: Large ribosomal subunit protein eL42Q (106 aa).

It belongs to the eukaryotic ribosomal protein eL42 family.

In Candida maltosa (Yeast), this protein is Large ribosomal subunit protein eL42Q (RIM-C).